The following is a 141-amino-acid chain: Small ribosomal subunit protein bS6 (141 aa).

Positions 97 to 141 (TGQSEMLKAEENRSERRERRDRPEHADSADGDDSDNSDASDNADE) are disordered. Positions 103 to 124 (LKAEENRSERRERRDRPEHADS) are enriched in basic and acidic residues. Residues 125–141 (ADGDDSDNSDASDNADE) are compositionally biased toward acidic residues.

This sequence belongs to the bacterial ribosomal protein bS6 family.

Binds together with bS18 to 16S ribosomal RNA. This Pseudomonas fluorescens (strain ATCC BAA-477 / NRRL B-23932 / Pf-5) protein is Small ribosomal subunit protein bS6.